The primary structure comprises 205 residues: Large ribosomal subunit protein uL3 (205 aa).

It belongs to the universal ribosomal protein uL3 family. In terms of assembly, part of the 50S ribosomal subunit. Forms a cluster with proteins L14 and L19.

Its function is as follows. One of the primary rRNA binding proteins, it binds directly near the 3'-end of the 23S rRNA, where it nucleates assembly of the 50S subunit. The polypeptide is Large ribosomal subunit protein uL3 (Flavobacterium johnsoniae (strain ATCC 17061 / DSM 2064 / JCM 8514 / BCRC 14874 / CCUG 350202 / NBRC 14942 / NCIMB 11054 / UW101) (Cytophaga johnsonae)).